Here is a 41-residue protein sequence, read N- to C-terminus: Iota-conotoxin-like r11d (41 aa).

4 disulfide bridges follow: Cys2–Cys16, Cys9–Cys19, Cys15–Cys24, and Cys18–Cys35. Pro8 carries the 4-hydroxyproline modification. Pro26 carries the 4-hydroxyproline modification.

Position 41 corresponds to a L-threonine, and not a D-threonine as firstly supposed. Expressed by the venom duct.

It localises to the secreted. Its function is as follows. Iota-conotoxins bind to voltage-gated sodium channels (Nav) and act as agonists by shifting the voltage-dependence of activation to more hyperpolarized levels. Both natural (L-Thr form) and synthetic (D-Thr form) peptides cause paralysis and death following intracranial injection and grooming and hypersensitivity upon intraperitoneal injection into mice. The L-Thr form of the peptide is 7-fold more potent than the D-Thr form. Both natural peptide (L-Thr form) and synthetic peptide (D-Thr form) are active on nerve, and on muscle. The polypeptide is Iota-conotoxin-like r11d (Conus radiatus (Rayed cone)).